The sequence spans 486 residues: Cardiolipin synthase A (486 aa).

Helical transmembrane passes span 3 to 23 (TFYTVVSWLVILGYWILIAGV) and 38 to 58 (MAWLLIIYILPLVGIIAYLSF). PLD phosphodiesterase domains follow at residues 219-246 (MDLRQHRKMVMIDNYIAYTGSMNMVDPR) and 399-426 (EGGLLHTKSVLVDGELSLVGTVNLDMRS). Active-site residues include His-224, Lys-226, Asp-231, His-404, Lys-406, and Asp-411.

It belongs to the phospholipase D family. Cardiolipin synthase subfamily. ClsA sub-subfamily.

The protein resides in the cell inner membrane. It catalyses the reaction 2 a 1,2-diacyl-sn-glycero-3-phospho-(1'-sn-glycerol) = a cardiolipin + glycerol. Catalyzes the reversible phosphatidyl group transfer from one phosphatidylglycerol molecule to another to form cardiolipin (CL) (diphosphatidylglycerol) and glycerol. The polypeptide is Cardiolipin synthase A (Citrobacter koseri (strain ATCC BAA-895 / CDC 4225-83 / SGSC4696)).